The primary structure comprises 388 residues: MEPSPASGGSETTRLVSPRDRSSAGGGLRLKSLFTEPSEPLPEGPKLEGMAFHHCHKNRVSQSGLSPERAQARRQLYAACVVCFIFMAGEVVGGYLAHSLAIMTDAAHLLADIGSMMASLFSLWLSTRPATRTMTFGWHRSETLGALASVVSLWIVTGILLYLAFLRLLHSDYHIEAGAMLLTASIAVCANMIMAFVLHQTGAPHSHGPRGAEYAPLEEGHGHPLSLGNTSVRAAFVHVLGDLLQSLGVLAASILIYFKPQYKVADPISTFLFSICALGSTAPTLRDVLLVLMEGAPRSVEFEPVRDTLLSVPGVRATHDLHLWALTLTYHVASAHLAIDSTADPEAILAEASSRLYSRFGFSSCTLQVEKYRSEMAHCLRCREPPKA.

A disordered region spans residues 1–42 (MEPSPASGGSETTRLVSPRDRSSAGGGLRLKSLFTEPSEPLP). Over 1 to 75 (MEPSPASGGS…SPERAQARRQ (75 aa)) the chain is Cytoplasmic. Phosphoserine occurs at positions 63 and 66. A helical transmembrane segment spans residues 76–96 (LYAACVVCFIFMAGEVVGGYL). At 97–105 (AHSLAIMTD) the chain is on the lumenal side. A helical membrane pass occupies residues 106 to 126 (AAHLLADIGSMMASLFSLWLS). The Zn(2+) site is built by His-108 and Asp-112. Over 127 to 145 (TRPATRTMTFGWHRSETLG) the chain is Cytoplasmic. Residues 146–166 (ALASVVSLWIVTGILLYLAFL) form a helical membrane-spanning segment. Residues 167–177 (RLLHSDYHIEA) lie on the Lumenal side of the membrane. The chain crosses the membrane as a helical span at residues 178–198 (GAMLLTASIAVCANMIMAFVL). The Cytoplasmic portion of the chain corresponds to 199–235 (HQTGAPHSHGPRGAEYAPLEEGHGHPLSLGNTSVRAA). The helical transmembrane segment at 236–256 (FVHVLGDLLQSLGVLAASILI) threads the bilayer. Residues His-238 and Asp-242 each contribute to the Zn(2+) site. Residues 257–263 (YFKPQYK) are Lumenal-facing. The helical transmembrane segment at 264-284 (VADPISTFLFSICALGSTAPT) threads the bilayer. Topologically, residues 285–388 (LRDVLLVLME…CLRCREPPKA (104 aa)) are cytoplasmic.

This sequence belongs to the cation diffusion facilitator (CDF) transporter (TC 2.A.4) family. SLC30A subfamily. Homodimer. Homodimerization could regulate efficiency of zinc transport. Interacts with TMEM163.

The protein localises to the cytoplasmic vesicle. The protein resides in the secretory vesicle. It is found in the synaptic vesicle membrane. It localises to the synapse. Its subcellular location is the synaptosome. The protein localises to the late endosome membrane. The protein resides in the lysosome membrane. It carries out the reaction Zn(2+)(in) + 2 H(+)(out) = Zn(2+)(out) + 2 H(+)(in). Its function is as follows. Probable proton-coupled zinc ion antiporter mediating the import of zinc from cytoplasm into synaptic vesicles and participating to cellular zinc ion homeostasis in the brain. The protein is Probable proton-coupled zinc antiporter SLC30A3 of Rattus norvegicus (Rat).